Here is a 588-residue protein sequence, read N- to C-terminus: Cyclomaltodextrinase (588 aa).

2 residues coordinate substrate: histidine 247 and arginine 326. Aspartate 328 serves as the catalytic Nucleophile. The active-site Proton donor is the glutamate 357. Substrate contacts are provided by residues 423 to 424, aspartate 468, and arginine 472; that span reads HD.

This sequence belongs to the glycosyl hydrolase 13 family. Exists as a monomer or a homodimer in solution. Homodimer is more active and stable than the monomer.

The catalysed reaction is cyclomaltodextrin + H2O = linear maltodextrin. With respect to regulation, no metal dependence, but Mn(2+) increases the activity with alpha-cyclodextrin as substrate. No effect on the activity with presence or absence of Ca(2+), Zn(2+), Tween-20 or EDTA. Hydrolyzes alpha-, beta- and gamma-cyclodextrins with the highest activity with alpha-cyclodextrin (cyclomaltohexaose). Pullulan is the preferred substrate from linear substrates. Maltose is a major product of these reactions. Is also able to hydrolyze maltotriose and acarbose, and transglycosylate their hydrolytic products. Major reaction products of maltotriose and of acarbose are maltose and glucose, and glucose and pseudotrisaccharide, respectively. No activity with glucose or maltose as substrate. The polypeptide is Cyclomaltodextrinase (Geobacillus thermopakistaniensis (strain MAS1)).